A 130-amino-acid polypeptide reads, in one-letter code: Keratin, high-sulfur matrix protein, IIIA3A (130 aa).

In terms of tissue distribution, wool.

In terms of biological role, the keratin products of mammalian epidermal derivatives such as wool and hair consist of microfibrils embedded in a rigid matrix of other proteins. The matrix proteins include the high-sulfur and high-tyrosine keratins, having molecular weights of 6-20 kDa, whereas the microfibrils contain the larger, low-sulfur keratins (40-56 kDa). The protein is Keratin, high-sulfur matrix protein, IIIA3A of Ovis aries (Sheep).